We begin with the raw amino-acid sequence, 186 residues long: Ribosome-recycling factor (186 aa).

It belongs to the RRF family.

The protein resides in the cytoplasm. In terms of biological role, responsible for the release of ribosomes from messenger RNA at the termination of protein biosynthesis. May increase the efficiency of translation by recycling ribosomes from one round of translation to another. The protein is Ribosome-recycling factor of Chlorobium phaeobacteroides (strain DSM 266 / SMG 266 / 2430).